The sequence spans 476 residues: Inosine-5'-monophosphate dehydrogenase (476 aa).

2 consecutive CBS domains span residues 93–151 (IIRD…VKDI) and 152–211 (MTKD…TRDE). Residues Asp-242 and 292–294 (GIG) contribute to the NAD(+) site. Gly-294 and Gly-296 together coordinate K(+). Ser-297 serves as a coordination point for IMP. Position 299 (Cys-299) interacts with K(+). Cys-299 acts as the Thioimidate intermediate in catalysis. Residues 334 to 336 (DGG), 357 to 358 (GY), and 381 to 385 (YRGMG) contribute to the IMP site. Arg-398 functions as the Proton acceptor in the catalytic mechanism. Glu-408 lines the IMP pocket. Glu-462 contributes to the K(+) binding site.

This sequence belongs to the IMPDH/GMPR family. In terms of assembly, homotetramer. K(+) serves as cofactor.

The enzyme catalyses IMP + NAD(+) + H2O = XMP + NADH + H(+). The protein operates within purine metabolism; XMP biosynthesis via de novo pathway; XMP from IMP: step 1/1. Its activity is regulated as follows. Mycophenolic acid (MPA) is a non-competitive inhibitor that prevents formation of the closed enzyme conformation by binding to the same site as the amobile flap. In contrast, mizoribine monophosphate (MZP) is a competitive inhibitor that induces the closed conformation. MPA is a potent inhibitor of mammalian IMPDHs but a poor inhibitor of the bacterial enzymes. MZP is a more potent inhibitor of bacterial IMPDH. In terms of biological role, catalyzes the conversion of inosine 5'-phosphate (IMP) to xanthosine 5'-phosphate (XMP), the first committed and rate-limiting step in the de novo synthesis of guanine nucleotides, and therefore plays an important role in the regulation of cell growth. The polypeptide is Inosine-5'-monophosphate dehydrogenase (Korarchaeum cryptofilum (strain OPF8)).